We begin with the raw amino-acid sequence, 517 residues long: GMP synthase [glutamine-hydrolyzing] (517 aa).

The 191-residue stretch at 9–199 (RILILDFGSQ…VLNACGCEGL (191 aa)) folds into the Glutamine amidotransferase type-1 domain. Cysteine 86 functions as the Nucleophile in the catalytic mechanism. Active-site residues include histidine 173 and glutamate 175. Residues 200–392 (WTSASIIEDA…LGLPYNMLYR (193 aa)) enclose the GMPS ATP-PPase domain. 227–233 (SGGVDSS) contributes to the ATP binding site.

In terms of assembly, homodimer.

The catalysed reaction is XMP + L-glutamine + ATP + H2O = GMP + L-glutamate + AMP + diphosphate + 2 H(+). It participates in purine metabolism; GMP biosynthesis; GMP from XMP (L-Gln route): step 1/1. Functionally, catalyzes the synthesis of GMP from XMP. The chain is GMP synthase [glutamine-hydrolyzing] from Vibrio atlanticus (strain LGP32) (Vibrio splendidus (strain Mel32)).